The primary structure comprises 460 residues: CWF19-like protein 2 homolog (460 aa).

Disordered stretches follow at residues 38 to 78 (GKTF…EDEK), 103 to 175 (KLES…TGTA), and 193 to 227 (RRHD…ESIK). Polar residues predominate over residues 54 to 68 (GSQQVRNDVMKSSDS). Positions 84-106 (KILKAEMKGDTDLVKKLKRKLES) form a coiled coil. Composition is skewed to basic and acidic residues over residues 113–131 (EPPK…DREG), 139–172 (RRSD…EEKT), and 205–227 (EMQK…ESIK). Residues 210–231 (KKKSDEKDKKRKEKESIKEHKR) are a coiled coil.

This sequence belongs to the CWF19 family.

This is CWF19-like protein 2 homolog from Caenorhabditis elegans.